Reading from the N-terminus, the 245-residue chain is 4-hydroxy-tetrahydrodipicolinate reductase (245 aa).

Residues G7–V12, G75–T77, and A102–F105 contribute to the NAD(+) site. Residue H132 is the Proton donor/acceptor of the active site. H133 is a (S)-2,3,4,5-tetrahydrodipicolinate binding site. Residue K136 is the Proton donor of the active site. A (S)-2,3,4,5-tetrahydrodipicolinate-binding site is contributed by G142–T143.

This sequence belongs to the DapB family.

It is found in the cytoplasm. The enzyme catalyses (S)-2,3,4,5-tetrahydrodipicolinate + NAD(+) + H2O = (2S,4S)-4-hydroxy-2,3,4,5-tetrahydrodipicolinate + NADH + H(+). It catalyses the reaction (S)-2,3,4,5-tetrahydrodipicolinate + NADP(+) + H2O = (2S,4S)-4-hydroxy-2,3,4,5-tetrahydrodipicolinate + NADPH + H(+). It functions in the pathway amino-acid biosynthesis; L-lysine biosynthesis via DAP pathway; (S)-tetrahydrodipicolinate from L-aspartate: step 4/4. Its function is as follows. Catalyzes the conversion of 4-hydroxy-tetrahydrodipicolinate (HTPA) to tetrahydrodipicolinate. This Mycolicibacterium gilvum (strain PYR-GCK) (Mycobacterium gilvum (strain PYR-GCK)) protein is 4-hydroxy-tetrahydrodipicolinate reductase.